The primary structure comprises 440 residues: Xylose isomerase (440 aa).

Residues histidine 100 and aspartate 103 contribute to the active site. 7 residues coordinate Mg(2+): glutamate 231, glutamate 267, histidine 270, aspartate 295, aspartate 306, aspartate 308, and aspartate 338.

This sequence belongs to the xylose isomerase family. As to quaternary structure, homotetramer. It depends on Mg(2+) as a cofactor.

The protein localises to the cytoplasm. It catalyses the reaction alpha-D-xylose = alpha-D-xylulofuranose. This Burkholderia cenocepacia (strain ATCC BAA-245 / DSM 16553 / LMG 16656 / NCTC 13227 / J2315 / CF5610) (Burkholderia cepacia (strain J2315)) protein is Xylose isomerase.